Consider the following 130-residue polypeptide: MTAPILVRIKRNKNDIVQNCDVYIGRQCNMGGWNLPDSKWKNPFTIKQYGSAEIVCEKYFKYIVSSDLFHDIPELKSKTIGCWCDFPVNKIITGFYCHGCVLIQLYKLIEKYDFDTHKIQSILKKAFCCD.

This is an uncharacterized protein from Acanthamoeba polyphaga mimivirus (APMV).